The primary structure comprises 1578 residues: BRD4-interacting chromatin-remodeling complex-associated protein (1578 aa).

Disordered stretches follow at residues 80–101, 631–673, and 725–951; these read DILG…DQPC, PAVT…PSLA, and IVSA…PPPR. Over residues 86–96 the composition is skewed to gly residues; sequence AAGGGGGGGGA. Composition is skewed to low complexity over residues 631-662 and 764-782; these read PAVT…TQPQ and IPAA…PSLP. Pro residues-rich tracts occupy residues 793-816, 824-841, and 865-888; these read MPSP…PPSQ, PSEP…PPTL, and PGPP…PASH. Residues 889 to 906 show a composition bias toward low complexity; the sequence is LPPASTPSAVASSSEPSA. Phosphoserine is present on Ser-929. Thr-931 bears the Phosphothreonine mark. Pro residues predominate over residues 942–951; the sequence is PTAPPPPPPR. Position 1067 is an N6-acetyllysine (Lys-1067). Residues 1206 to 1316 form a disordered region; sequence EKPDEYVSSS…NRPPIKTYEA (111 aa). 2 stretches are compositionally biased toward low complexity: residues 1233-1247 and 1275-1294; these read SHGQ…GTSA and ASSS…AASS. Lys-1327 is covalently cross-linked (Glycyl lysine isopeptide (Lys-Gly) (interchain with G-Cter in SUMO2)). 2 disordered regions span residues 1342-1435 and 1457-1578; these read DPVH…PTKV and VLKG…TLNR. A compositionally biased stretch (pro residues) spans 1346-1370; sequence QPLPAPTPAKGAEPPPHPAPPPLPP. Ser-1427 is modified (phosphoserine). Residues 1502–1532 show a composition bias toward polar residues; it reads ASFSSDSPQDDTLTEHLQSAIDSILNLQQAP. Over residues 1538 to 1553 the composition is skewed to pro residues; it reads GPYPHTGPTPGTPTSP.

As to quaternary structure, component of the multiprotein chromatin-remodeling complexes SWI/SNF: SWI/SNF-A (BAF), SWI/SNF-B (PBAF) and related complexes. The canonical complex contains a catalytic subunit (either SMARCA4/BRG1/BAF190A or SMARCA2/BRM/BAF190B) and at least SMARCE1, ACTL6A/BAF53, SMARCC1/BAF155, SMARCC2/BAF170, and SMARCB1/SNF5/BAF47. Other subunits specific to each of the complexes may also be present permitting several possible combinations developmentally and tissue specific. Component of the SWI/SNF (GBAF) subcomplex, which includes at least BICRA or BICRAL (mutually exclusive), BRD9, SS18, the core BAF subunits, SMARCA2/BRM, SMARCA4/BRG1/BAF190A, ACTL6A/BAF53, SMARCC1/BAF155, and SMARCD1/BAF60A. Interacts with BRD4; the interaction bridges BRD4 to the GBAF complex.

Its subcellular location is the nucleus. In terms of biological role, component of SWI/SNF chromatin remodeling subcomplex GBAF that carries out key enzymatic activities, changing chromatin structure by altering DNA-histone contacts within a nucleosome in an ATP-dependent manner. May play a role in BRD4-mediated gene transcription. This chain is BRD4-interacting chromatin-remodeling complex-associated protein, found in Mus musculus (Mouse).